Reading from the N-terminus, the 134-residue chain is Profilin-2 (134 aa).

Cysteines 13 and 118 form a disulfide. Positions 84-100 (AVIRGKKGSGGITIKKT) match the Involved in PIP2 interaction motif. Threonine 114 carries the phosphothreonine modification.

It belongs to the profilin family. Occurs in many kinds of cells as a complex with monomeric actin in a 1:1 ratio. In terms of processing, phosphorylated by MAP kinases.

The protein resides in the cytoplasm. Its subcellular location is the cytoskeleton. Its function is as follows. Binds to actin and affects the structure of the cytoskeleton. At high concentrations, profilin prevents the polymerization of actin, whereas it enhances it at low concentrations. This chain is Profilin-2, found in Olea europaea (Common olive).